Here is a 684-residue protein sequence, read N- to C-terminus: ATP-dependent zinc metalloprotease FtsH (684 aa).

The Cytoplasmic segment spans residues M1–R21. A helical transmembrane segment spans residues F22–N42. The Periplasmic segment spans residues D43–A138. The chain crosses the membrane as a helical span at residues I139–L159. Over M160–A684 the chain is Cytoplasmic. G236–T243 provides a ligand contact to ATP. H459 is a Zn(2+) binding site. Residue E460 is part of the active site. The Zn(2+) site is built by H463 and D534. The segment covering E647–E662 has biased composition (basic and acidic residues). A disordered region spans residues E647 to A684.

This sequence in the central section; belongs to the AAA ATPase family. The protein in the C-terminal section; belongs to the peptidase M41 family. Homohexamer. Zn(2+) serves as cofactor.

It is found in the cell inner membrane. Functionally, acts as a processive, ATP-dependent zinc metallopeptidase for both cytoplasmic and membrane proteins. Plays a role in the quality control of integral membrane proteins. The protein is ATP-dependent zinc metalloprotease FtsH of Parabacteroides distasonis (strain ATCC 8503 / DSM 20701 / CIP 104284 / JCM 5825 / NCTC 11152).